We begin with the raw amino-acid sequence, 538 residues long: MMVQSIQIVLPVALFFLIVFNGFTVEGSKKEAQLYRDLLTNYSYLVRPVRNPKKALTVTMKVFIQQVLLVDAKHQMIEVNAWLKYIWTDFRLRWNPLDYENITSVRFQGEDQIWQPDILLYNRYIEDEQESFDITYKTNAVAYSDGVINWIPPGIFKLSCKMDITLFPFDEQICFMKFGSWTYHGFALDLRLDVVKGQEPSADLSTYITNGEWHLLSAPARREEKFYKCCKEPYPTVKFYLHLRRRTFYYVFNVVLPTLLVSFMSLLAFCLPATDLSEKIGLQTTILLSVCFFLTILSEMTPTTSEAVPLLGVFFSALTFIVAMSTTFTILVLNIRYRQITNHYLSPMFRSIFLECLPWLMMMKRPDHKFRRGSSYRDSSADQCVQCAKNAELKSILRGTDNQQQIETNTFYPFPTETLSLNRKVGDGLFIQRRCQIHEEARSEKFTHGMLACEKSLRENGSELANILVTILKMYEVMVSQVERIRKRIALKRKRKDIQDEWKFAAQAVDRFCLIIFTIVFIICCFIFVAIPPIKILD.

A signal peptide spans 1 to 27; that stretch reads MMVQSIQIVLPVALFFLIVFNGFTVEG. Over 28–250 the chain is Extracellular; it reads SKKEAQLYRD…LHLRRRTFYY (223 aa). Asparagine 41 and asparagine 101 each carry an N-linked (GlcNAc...) asparagine glycan. 2 cysteine pairs are disulfide-bonded: cysteine 160/cysteine 174 and cysteine 229/cysteine 230. 3 helical membrane-spanning segments follow: residues 251–271, 280–300, and 313–333; these read VFNV…AFCL, IGLQ…LSEM, and VFFS…ILVL. Residues 334 to 513 lie on the Cytoplasmic side of the membrane; the sequence is NIRYRQITNH…FAAQAVDRFC (180 aa). Residues 514–534 traverse the membrane as a helical segment; that stretch reads LIIFTIVFIICCFIFVAIPPI.

It belongs to the ligand-gated ion channel (TC 1.A.9) family. Acetylcholine receptor (TC 1.A.9.1) subfamily. In terms of assembly, forms a homooligomeric channel blocked by alpha-bungarotoxin. The structure is probably pentameric.

It localises to the postsynaptic cell membrane. The protein resides in the cell membrane. After binding acetylcholine, the AChR responds by an extensive change in conformation that affects all subunits and leads to opening of an ion-conducting channel across the plasma membrane. This chain is Acetylcholine receptor subunit alpha-type acr-7 (acr-7), found in Caenorhabditis elegans.